The sequence spans 549 residues: Probable protein kinase UbiB (549 aa).

The 379-residue stretch at 123 to 501 (DFNETPLASA…QQQAHKSNYL (379 aa)) folds into the Protein kinase domain. Residues 129–137 (LASASISQV) and K152 each bind ATP. The active-site Proton acceptor is D287. Helical transmembrane passes span 496–516 (HKSN…TLLI) and 520–540 (ATLW…FVGW).

This sequence belongs to the ABC1 family. UbiB subfamily.

It localises to the cell inner membrane. Its pathway is cofactor biosynthesis; ubiquinone biosynthesis [regulation]. Its function is as follows. Is probably a protein kinase regulator of UbiI activity which is involved in aerobic coenzyme Q (ubiquinone) biosynthesis. In Shewanella baltica (strain OS185), this protein is Probable protein kinase UbiB.